We begin with the raw amino-acid sequence, 101 residues long: Large ribosomal subunit protein eL30 (101 aa).

This sequence belongs to the eukaryotic ribosomal protein eL30 family.

The polypeptide is Large ribosomal subunit protein eL30 (Pyrobaculum neutrophilum (strain DSM 2338 / JCM 9278 / NBRC 100436 / V24Sta) (Thermoproteus neutrophilus)).